A 243-amino-acid chain; its full sequence is 3-deoxy-manno-octulosonate cytidylyltransferase (243 aa).

This sequence belongs to the KdsB family.

Its subcellular location is the cytoplasm. It carries out the reaction 3-deoxy-alpha-D-manno-oct-2-ulosonate + CTP = CMP-3-deoxy-beta-D-manno-octulosonate + diphosphate. The protein operates within nucleotide-sugar biosynthesis; CMP-3-deoxy-D-manno-octulosonate biosynthesis; CMP-3-deoxy-D-manno-octulosonate from 3-deoxy-D-manno-octulosonate and CTP: step 1/1. Its pathway is bacterial outer membrane biogenesis; lipopolysaccharide biosynthesis. Its function is as follows. Activates KDO (a required 8-carbon sugar) for incorporation into bacterial lipopolysaccharide in Gram-negative bacteria. This Helicobacter pylori (strain HPAG1) protein is 3-deoxy-manno-octulosonate cytidylyltransferase.